A 719-amino-acid chain; its full sequence is Leucine-rich repeat and fibronectin type-III domain-containing protein 5 (719 aa).

Positions 1 to 17 are cleaved as a signal peptide; that stretch reads MEKILFYLFLIGIAVKA. The LRRNT domain occupies 18–51; it reads QICPKRCVCQILSPNLATLCAKKGLLFVPPNIDR. At 18 to 529 the chain is on the extracellular side; sequence QICPKRCVCQ…MQSQFLGGTM (512 aa). LRR repeat units follow at residues 52-73, 76-97, 100-121, 124-145, 148-169, 172-193, and 196-217; these read RTVELRLADNFVTNIKRKDFAN, SLVDLTLSRNTISFITPHAFAD, NLRALHLNSNRLTKITNDMFSG, NLHHLILNNNQLTLISSTAFDD, ALEELDLSYNNLETIPWDAVEK, SLHTLSLDHNMIDNIPKGTFSH, and KMTRLDVTSNKLQKLPPDPLFQ. Asparagine 73 carries N-linked (GlcNAc...) asparagine glycosylation. The LRRCT domain occupies 240-286; sequence NPLHCNCELLWLRRLSREDDLETCASPPLLTGRYFWSIPEEEFLCEP. The Ig-like domain occupies 287-373; that stretch reads PLITRHTHEM…GEATQIVDLH (87 aa). A disulfide bridge links cysteine 308 with cysteine 357. Residues asparagine 330, asparagine 339, asparagine 382, asparagine 406, and asparagine 452 are each glycosylated (N-linked (GlcNAc...) asparagine). The segment at 385–414 is disordered; that stretch reads NHIHEPDPGSSDISTSTKSGSNTSSSNGDT. Residues 393–414 show a composition bias toward low complexity; the sequence is GSSDISTSTKSGSNTSSSNGDT. Residues 414 to 503 form the Fibronectin type-III domain; sequence TKLSQDKIVV…ITSLTATRVV (90 aa). A helical membrane pass occupies residues 530–550; that stretch reads IIIIGGIIVASVLVFIIILMI. The Cytoplasmic segment spans residues 551–719; the sequence is RYKVCNNNGQ…VQETQRLELI (169 aa). The span at 615–627 shows a compositional bias: low complexity; the sequence is ETCSSQDSSTTTS. Residues 615–694 form a disordered region; it reads ETCSSQDSST…SVTEGPTSKR (80 aa). 2 stretches are compositionally biased toward polar residues: residues 628 to 641 and 649 to 677; these read ALPPSWTSSTSVSQ and TKPSTEPQNEAVTNVESQNTNRNNSTALQ.

It belongs to the LRFN family. Can form heteromeric complexes with LRFN1, LRFN2, LRFN3 and LFRN4. Able to form homomeric complexes across cell junctions, between adjacent cells. Does not interact with DLG1, DLG2, DLG3 and DLG4.

It localises to the membrane. In terms of biological role, cell adhesion molecule that mediates homophilic cell-cell adhesion in a Ca(2+)-independent manner. Promotes neurite outgrowth in hippocampal neurons. In Homo sapiens (Human), this protein is Leucine-rich repeat and fibronectin type-III domain-containing protein 5 (LRFN5).